Reading from the N-terminus, the 635-residue chain is Threonine--tRNA ligase (635 aa).

The 61-residue stretch at 1–61 (MIQITLPDAS…EKDSALSIIT (61 aa)) folds into the TGS domain. Residues 242–533 (DHRKLGKELD…LIEEHAGALP (292 aa)) form a catalytic region. 3 residues coordinate Zn(2+): cysteine 333, histidine 384, and histidine 510.

Belongs to the class-II aminoacyl-tRNA synthetase family. As to quaternary structure, homodimer. The cofactor is Zn(2+).

Its subcellular location is the cytoplasm. The catalysed reaction is tRNA(Thr) + L-threonine + ATP = L-threonyl-tRNA(Thr) + AMP + diphosphate + H(+). In terms of biological role, catalyzes the attachment of threonine to tRNA(Thr) in a two-step reaction: L-threonine is first activated by ATP to form Thr-AMP and then transferred to the acceptor end of tRNA(Thr). Also edits incorrectly charged L-seryl-tRNA(Thr). In Polaromonas sp. (strain JS666 / ATCC BAA-500), this protein is Threonine--tRNA ligase.